A 421-amino-acid chain; its full sequence is Gamma-glutamyl phosphate reductase (421 aa).

Belongs to the gamma-glutamyl phosphate reductase family.

The protein localises to the cytoplasm. The catalysed reaction is L-glutamate 5-semialdehyde + phosphate + NADP(+) = L-glutamyl 5-phosphate + NADPH + H(+). It participates in amino-acid biosynthesis; L-proline biosynthesis; L-glutamate 5-semialdehyde from L-glutamate: step 2/2. In terms of biological role, catalyzes the NADPH-dependent reduction of L-glutamate 5-phosphate into L-glutamate 5-semialdehyde and phosphate. The product spontaneously undergoes cyclization to form 1-pyrroline-5-carboxylate. The sequence is that of Gamma-glutamyl phosphate reductase from Acinetobacter baumannii (strain SDF).